The primary structure comprises 447 residues: Tektin-4 (447 aa).

2 coiled-coil regions span residues 322–348 and 375–423; these read LRKT…DKEA and FRLL…TNSL.

This sequence belongs to the tektin family. Microtubule inner protein component of sperm flagellar doublet microtubules. In terms of processing, ubiquitinated, leading to its degradation. Deubiquitinated by USP16, promoting its stability. As to expression, detected in testis, where it is weakly expressed in round spermatids, and strongly expressed in the flagellum of step 16 elongated spermatids (at protein level). Expressed in spermatozoa. In the sperm flagellum, localizes to the principal piece and midpiece (at protein level). Specifically expressed in testis; not detected in other tissues tested.

It localises to the cytoplasm. It is found in the cytoskeleton. The protein localises to the cilium axoneme. The protein resides in the flagellum axoneme. Microtubule inner protein (MIP) part of the dynein-decorated doublet microtubules (DMTs) in cilia and flagellar axoneme. Forms filamentous polymers in the walls of ciliary and flagellar microtubules. Contributes to normal sperm motility. The chain is Tektin-4 (Tekt4) from Mus musculus (Mouse).